The primary structure comprises 332 residues: Melanocortin receptor 4 (332 aa).

The Extracellular portion of the chain corresponds to 1 to 43; that stretch reads MVNSTHRGMHASLHLWNRSSHRLHSNASESLGKGYSDGGCYEQ. 3 N-linked (GlcNAc...) asparagine glycosylation sites follow: asparagine 3, asparagine 17, and asparagine 26. 2 cysteine pairs are disulfide-bonded: cysteine 40–cysteine 279 and cysteine 271–cysteine 277. The helical transmembrane segment at 44–69 threads the bilayer; it reads LFVSPEVFVTLGVISLLENILVIVAI. The Cytoplasmic portion of the chain corresponds to 70–81; sequence AKNKNLHSPMYF. The chain crosses the membrane as a helical span at residues 82–106; sequence FICSLAVADMLVSVSNGSETIVITL. Residues glutamate 100, aspartate 122, and aspartate 126 each contribute to the Ca(2+) site. Residues 107-123 lie on the Extracellular side of the membrane; it reads LNSTDTDTQSFTVNIDN. Residues 124–145 form a helical membrane-spanning segment; sequence VIDSVICSSLLASICSLLSIAV. The Cytoplasmic segment spans residues 146–165; sequence DRYFTIFYALQYHNIMTVKR. Residues 166-186 traverse the membrane as a helical segment; it reads VRIIISCIWAACTVSGILFII. The Extracellular portion of the chain corresponds to 187 to 191; it reads YSDSS. A helical transmembrane segment spans residues 192–215; it reads AVIICLITMFFTMLALMASLYVHM. The Cytoplasmic portion of the chain corresponds to 216–248; it reads FLMARLHIKRIAVLPGTGAIRQGANMKGAITLT. A helical membrane pass occupies residues 249-271; that stretch reads ILIGVFVVCWAPFFLHLIFYISC. Over 272–280 the chain is Extracellular; the sequence is PQNPYCVCF. The chain crosses the membrane as a helical span at residues 281-304; that stretch reads MSHFNLYLILIMCNSVIDPLIYAL. At 305-332 the chain is on the cytoplasmic side; that stretch reads RSQELRKTFKEIICCYPLGGLCDLSSRY. The S-palmitoyl cysteine moiety is linked to residue cysteine 318.

Belongs to the G-protein coupled receptor 1 family. Homodimer; disulfide-linked, also forms higher order oligomers. Interacts with GNAS. Interacts with ATRNL1. Interacts with MGRN1; this interaction competes with GNAS-binding and thus inhibits agonist-induced cAMP production. Interacts with MRAP and MRAP2; these associated factors increase ligand-sensitivity and generation of cAMP.

It localises to the cell membrane. Hormone receptor that acts as a key component of the leptin-melanocortin pathway at the intersection of homeostatic maintenance of energetic state. Plays a role in regulating food intake: activation by a stimulating hormone such as anorexigenic alpha-melanocyte stimulating hormone (alpha-MSH) inhibits appetite, whereas binding to a natural antagonist like Agouti-related protein/AGRP promotes appetite. G-protein-coupled receptor that activates conventional Galphas signaling leading to induction of anorexogenic signaling in the hypothalamus to result in negative energy balance. Regulates the firing activity of neurons from the hypothalamus by alpha-MSH and AGRP independently of Galphas signaling by ligand-induced coupling of closure of inwardly rectifying potassium channel KCNJ13. In intestinal epithelial cells, plays a role in the inhibition of hepatic glucose production via nesfatin-1/NUCB2 leading to increased cyclic adenosine monophosphate (cAMP) levels and glucagon-like peptide 1 (GLP-1) secretion in the intestinal epithelium. This is Melanocortin receptor 4 (MC4R) from Macaca fascicularis (Crab-eating macaque).